Consider the following 256-residue polypeptide: Acetyl-coenzyme A carboxylase carboxyl transferase subunit alpha (256 aa).

The 236-residue stretch at 1-236 (MSDVARILKE…KTAIVDELAE (236 aa)) folds into the CoA carboxyltransferase C-terminal domain.

Belongs to the AccA family. Acetyl-CoA carboxylase is a heterohexamer composed of biotin carboxyl carrier protein (AccB), biotin carboxylase (AccC) and two subunits each of ACCase subunit alpha (AccA) and ACCase subunit beta (AccD).

It is found in the cytoplasm. It catalyses the reaction N(6)-carboxybiotinyl-L-lysyl-[protein] + acetyl-CoA = N(6)-biotinyl-L-lysyl-[protein] + malonyl-CoA. It functions in the pathway lipid metabolism; malonyl-CoA biosynthesis; malonyl-CoA from acetyl-CoA: step 1/1. Functionally, component of the acetyl coenzyme A carboxylase (ACC) complex. First, biotin carboxylase catalyzes the carboxylation of biotin on its carrier protein (BCCP) and then the CO(2) group is transferred by the carboxyltransferase to acetyl-CoA to form malonyl-CoA. This chain is Acetyl-coenzyme A carboxylase carboxyl transferase subunit alpha, found in Streptococcus thermophilus (strain ATCC BAA-491 / LMD-9).